A 239-amino-acid polypeptide reads, in one-letter code: Pyridoxine 5'-phosphate synthase (239 aa).

Asn-7 is a binding site for 3-amino-2-oxopropyl phosphate. 9–10 serves as a coordination point for 1-deoxy-D-xylulose 5-phosphate; that stretch reads DH. A 3-amino-2-oxopropyl phosphate-binding site is contributed by Arg-18. Residue His-43 is the Proton acceptor of the active site. Positions 45 and 50 each coordinate 1-deoxy-D-xylulose 5-phosphate. Glu-70 serves as the catalytic Proton acceptor. Thr-100 serves as a coordination point for 1-deoxy-D-xylulose 5-phosphate. Catalysis depends on His-191, which acts as the Proton donor. 3-amino-2-oxopropyl phosphate is bound by residues Gly-192 and 213–214; that span reads GH.

It belongs to the PNP synthase family. As to quaternary structure, homooctamer; tetramer of dimers.

It localises to the cytoplasm. It catalyses the reaction 3-amino-2-oxopropyl phosphate + 1-deoxy-D-xylulose 5-phosphate = pyridoxine 5'-phosphate + phosphate + 2 H2O + H(+). The protein operates within cofactor biosynthesis; pyridoxine 5'-phosphate biosynthesis; pyridoxine 5'-phosphate from D-erythrose 4-phosphate: step 5/5. Its function is as follows. Catalyzes the complicated ring closure reaction between the two acyclic compounds 1-deoxy-D-xylulose-5-phosphate (DXP) and 3-amino-2-oxopropyl phosphate (1-amino-acetone-3-phosphate or AAP) to form pyridoxine 5'-phosphate (PNP) and inorganic phosphate. This is Pyridoxine 5'-phosphate synthase from Geobacter sulfurreducens (strain ATCC 51573 / DSM 12127 / PCA).